The sequence spans 321 residues: Anthranilate phosphoribosyltransferase (321 aa).

5-phospho-alpha-D-ribose 1-diphosphate contacts are provided by residues Gly72, 75 to 76 (GD), Thr80, 82 to 85 (NVST), 99 to 107 (KHGNVSITS), and Ser111. Anthranilate is bound at residue Gly72. Ser84 lines the Mg(2+) pocket. Residue Asn102 coordinates anthranilate. Arg157 serves as a coordination point for anthranilate. The Mg(2+) site is built by Asp216 and Glu217.

It belongs to the anthranilate phosphoribosyltransferase family. In terms of assembly, homodimer. Mg(2+) is required as a cofactor.

The catalysed reaction is N-(5-phospho-beta-D-ribosyl)anthranilate + diphosphate = 5-phospho-alpha-D-ribose 1-diphosphate + anthranilate. The protein operates within amino-acid biosynthesis; L-tryptophan biosynthesis; L-tryptophan from chorismate: step 2/5. Catalyzes the transfer of the phosphoribosyl group of 5-phosphorylribose-1-pyrophosphate (PRPP) to anthranilate to yield N-(5'-phosphoribosyl)-anthranilate (PRA). The sequence is that of Anthranilate phosphoribosyltransferase from Methanococcus maripaludis (strain C6 / ATCC BAA-1332).